A 439-amino-acid chain; its full sequence is MKMHFCIPVSQQRPDALGGRYVLYSVYLDGFLFCKVRYSQLHRWDEQLRRVFGNCLPPFPPKYYLAMTTAMAEERRDQLERYLQNVTADPRVTRSDVFTEFLTLVQLHTLNITIQNVELAVFLPDGRSIKVEGLTSDTAERVLEVMAHKLGLQPDLVGYFGLFLIQCFPEGKLSVVKKLADFELPYTSLQSSEMENCKIGLRKWYLDPALDSMLMDCRAAGDLLYMQAVQDIEKEWMKPTQAQREELKALQKKENQTKFLELSQEVRHYGYVQLDPCTCNHPEPGCGAQLSIGNNEISCCITLPNGQIQDIAFQMSRVKCWQVTFLGTLLDTDGPQRTLNQNLELRFQYSEDSCQQWFVIYTKQAFFLSSCLKKMISERMTKLTEQSPEMQIEVPEQGRSKKHPSQPSQQKVYFNFLRKGKMKRSEGDYVWDTLMEEGL.

In terms of domain architecture, PX spans 1 to 109 (MKMHFCIPVS…EFLTLVQLHT (109 aa)). The disordered stretch occupies residues 384–409 (TEQSPEMQIEVPEQGRSKKHPSQPSQ).

Belongs to the sorting nexin family. Interacts with CCDC22, CCDC93, VPS26C and VPS35L, associates with the retriever and CCC complexes.

Functionally, may be involved in protein trafficking. This is Sorting nexin-31 (Snx31) from Mus musculus (Mouse).